The following is a 563-amino-acid chain: Coiled-coil domain-containing protein 63 (563 aa).

The disordered stretch occupies residues 1–29 (MSVLKKNRRKDSDTPQEPSEKAKEQQAEA). The span at 10–29 (KDSDTPQEPSEKAKEQQAEA) shows a compositional bias: basic and acidic residues. 3 coiled-coil regions span residues 18–201 (PSEK…QLQH), 233–291 (AMKD…AKKH), and 341–422 (TELN…KKIN).

In terms of biological role, plays a role in spermiogenesis. Involved in the elongation of flagella and the formation of sperm heads. This chain is Coiled-coil domain-containing protein 63, found in Homo sapiens (Human).